A 129-amino-acid chain; its full sequence is Glycine cleavage system H protein (129 aa).

A Lipoyl-binding domain is found at 24 to 106; that stretch reads TYTVGITEHA…YAGGWIFKIK (83 aa). Lys65 is modified (N6-lipoyllysine).

Belongs to the GcvH family. The glycine cleavage system is composed of four proteins: P, T, L and H. Requires (R)-lipoate as cofactor.

In terms of biological role, the glycine cleavage system catalyzes the degradation of glycine. The H protein shuttles the methylamine group of glycine from the P protein to the T protein. The chain is Glycine cleavage system H protein from Escherichia coli O139:H28 (strain E24377A / ETEC).